A 302-amino-acid chain; its full sequence is D-alanine--D-alanine ligase (302 aa).

The ATP-grasp domain maps to 100-294 (KALFRREGLL…FPELVEKLIQ (195 aa)). 127 to 180 (GLNYPIFVKSNIGGSSVNVHLVTNYEELFIAMEALFNAGEEVLLEEAIIGQEVT) is a binding site for ATP. Mg(2+) is bound by residues Asp-248, Glu-261, and Asn-263.

This sequence belongs to the D-alanine--D-alanine ligase family. The cofactor is Mg(2+). Mn(2+) is required as a cofactor.

It localises to the cytoplasm. It carries out the reaction 2 D-alanine + ATP = D-alanyl-D-alanine + ADP + phosphate + H(+). It participates in cell wall biogenesis; peptidoglycan biosynthesis. Cell wall formation. The sequence is that of D-alanine--D-alanine ligase from Lawsonia intracellularis (strain PHE/MN1-00).